Reading from the N-terminus, the 543-residue chain is MAKDIKFSADARAAMVRGVDMLADTVKVTLGPKGRNVVLEKAFGSPLITNDGVTIAKEIELEDHFENMGAKLVSEVASKTNDIAGDGTTTATVLTQAIVHEGLKNVTAGANPIGIRRGIETATATAVEALKAIAQPVSGKEAIAQVAAVSSRSEKVGEYISEAMERVGNDGVITIEESRGMETELEVVEGMQFDRGYLSQYMVTDNEKMVADLENPFILITDKKVSNIQDILPLLEEVLKTNRPLLIIADDVDGEALPTLVLNKIRGTFNVVAVKAPGFGDRRKAMLEDIAILTGGTVITEDLGLELKDATMTALGQAAKITVDKDSTVIVEGSGSSEAIANRIALIKSQLETTTSDFDREKLQERLAKLAGGVAVIKVGAPTETALKEMKLRIEDALNATRAAVEEGIVAGGGTALITVIEKVAALELEGDDATGRNIVLRALEEPVRQIALNAGYEGSVVIDKLKNSPAGTGFNAATGEWVDMIKTGIIDPVKVTRSALQNAASVASLILTTEAVVANKPEPAAPAPAMPAGMDPGMMGGF.

Residues 29 to 32 (TLGP), 86 to 90 (DGTTT), Gly-413, 476 to 478 (NAA), and Asp-492 contribute to the ATP site.

Belongs to the chaperonin (HSP60) family. As to quaternary structure, forms a cylinder of 14 subunits composed of two heptameric rings stacked back-to-back. Interacts with the co-chaperonin GroES.

The protein resides in the cytoplasm. The catalysed reaction is ATP + H2O + a folded polypeptide = ADP + phosphate + an unfolded polypeptide.. Its function is as follows. Together with its co-chaperonin GroES, plays an essential role in assisting protein folding. The GroEL-GroES system forms a nano-cage that allows encapsulation of the non-native substrate proteins and provides a physical environment optimized to promote and accelerate protein folding. In Streptococcus pyogenes serotype M5 (strain Manfredo), this protein is Chaperonin GroEL.